The sequence spans 391 residues: UPF0229 protein BAA_0633 (391 aa).

A compositionally biased stretch (polar residues) spans 1 to 16; the sequence is MGEENQPNYTISQENW. 2 disordered regions span residues 1-31 and 80-117; these read MGEENQPNYTISQENWSLHRKGYDDQQRHQE and HVGQGNGDSKVGDVVARDGSGGQKQKGPGKGQGAGDAA. Residues 21–31 show a composition bias toward basic and acidic residues; that stretch reads KGYDDQQRHQE. Positions 98–115 are enriched in gly residues; the sequence is GSGGQKQKGPGKGQGAGD.

This sequence belongs to the UPF0229 family.

This chain is UPF0229 protein BAA_0633, found in Bacillus anthracis (strain A0248).